Here is a 552-residue protein sequence, read N- to C-terminus: CTP synthase (552 aa).

The interval 1-267 is amidoligase domain; it reads MAKFIFVTGG…AEQTLKLLRM (267 aa). Position 13 (Ser13) interacts with CTP. Ser13 serves as a coordination point for UTP. Residues 14-19 and Asp71 contribute to the ATP site; that span reads SIGKGI. Residues Asp71 and Glu141 each coordinate Mg(2+). CTP-binding positions include 148-150, 188-193, and Lys224; these read DIE and KTKPTQ. Residues 188–193 and Lys224 each bind UTP; that span reads KTKPTQ. Residues 292-534 form the Glutamine amidotransferase type-1 domain; the sequence is DIAIVGKYVQ…IQAAGNHKSQ (243 aa). Position 354 (Gly354) interacts with L-glutamine. Cys381 functions as the Nucleophile; for glutamine hydrolysis in the catalytic mechanism. Residues 382-385, Glu405, and Arg462 each bind L-glutamine; that span reads LGMQ. Catalysis depends on residues His507 and Glu509. The tract at residues 533 to 552 is disordered; it reads SQPISDELDNQSTEMSISLS.

The protein belongs to the CTP synthase family. In terms of assembly, homotetramer.

It carries out the reaction UTP + L-glutamine + ATP + H2O = CTP + L-glutamate + ADP + phosphate + 2 H(+). It catalyses the reaction L-glutamine + H2O = L-glutamate + NH4(+). The catalysed reaction is UTP + NH4(+) + ATP = CTP + ADP + phosphate + 2 H(+). The protein operates within pyrimidine metabolism; CTP biosynthesis via de novo pathway; CTP from UDP: step 2/2. Allosterically activated by GTP, when glutamine is the substrate; GTP has no effect on the reaction when ammonia is the substrate. The allosteric effector GTP functions by stabilizing the protein conformation that binds the tetrahedral intermediate(s) formed during glutamine hydrolysis. Inhibited by the product CTP, via allosteric rather than competitive inhibition. Its function is as follows. Catalyzes the ATP-dependent amination of UTP to CTP with either L-glutamine or ammonia as the source of nitrogen. Regulates intracellular CTP levels through interactions with the four ribonucleotide triphosphates. The chain is CTP synthase from Picosynechococcus sp. (strain ATCC 27264 / PCC 7002 / PR-6) (Agmenellum quadruplicatum).